A 235-amino-acid polypeptide reads, in one-letter code: Fibrillarin-like rRNA/tRNA 2'-O-methyltransferase (235 aa).

S-adenosyl-L-methionine-binding positions include 91–92 (TT), 110–111 (EF), 137–138 (DA), and 157–160 (DVAQ).

The protein belongs to the methyltransferase superfamily. Fibrillarin family. Interacts with nop5. Component of box C/D small ribonucleoprotein (sRNP) particles that contain rpl7ae, FlpA and nop5, plus a guide RNA.

In terms of biological role, involved in pre-rRNA and tRNA processing. Utilizes the methyl donor S-adenosyl-L-methionine to catalyze the site-specific 2'-hydroxyl methylation of ribose moieties in rRNA and tRNA. Site specificity is provided by a guide RNA that base pairs with the substrate. Methylation occurs at a characteristic distance from the sequence involved in base pairing with the guide RNA. The chain is Fibrillarin-like rRNA/tRNA 2'-O-methyltransferase from Pyrobaculum aerophilum (strain ATCC 51768 / DSM 7523 / JCM 9630 / CIP 104966 / NBRC 100827 / IM2).